The sequence spans 279 residues: Oxygen-dependent coproporphyrinogen-III oxidase (279 aa).

Ser-102 contacts substrate. Positions 106 and 116 each coordinate a divalent metal cation. His-116 functions as the Proton donor in the catalytic mechanism. Asn-118–Arg-120 serves as a coordination point for substrate. The a divalent metal cation site is built by His-149 and His-179. Residues Tyr-244–Asn-279 form an important for dimerization region.

The protein belongs to the aerobic coproporphyrinogen-III oxidase family. In terms of assembly, homodimer. The cofactor is a divalent metal cation.

It is found in the cytoplasm. The enzyme catalyses coproporphyrinogen III + O2 + 2 H(+) = protoporphyrinogen IX + 2 CO2 + 2 H2O. Its pathway is porphyrin-containing compound metabolism; protoporphyrin-IX biosynthesis; protoporphyrinogen-IX from coproporphyrinogen-III (O2 route): step 1/1. In terms of biological role, involved in the heme biosynthesis. Catalyzes the aerobic oxidative decarboxylation of propionate groups of rings A and B of coproporphyrinogen-III to yield the vinyl groups in protoporphyrinogen-IX. This is Oxygen-dependent coproporphyrinogen-III oxidase from Rickettsia felis (strain ATCC VR-1525 / URRWXCal2) (Rickettsia azadi).